The sequence spans 185 residues: UPF0200 protein TON_1344 (185 aa).

An ATP-binding site is contributed by 7 to 14 (GMPGSGKS).

This sequence belongs to the UPF0200 family.

The chain is UPF0200 protein TON_1344 from Thermococcus onnurineus (strain NA1).